Consider the following 421-residue polypeptide: UDP-N-acetylglucosamine 1-carboxyvinyltransferase 1 (421 aa).

22–23 (KN) serves as a coordination point for phosphoenolpyruvate. UDP-N-acetyl-alpha-D-glucosamine is bound at residue R95. The active-site Proton donor is C119. C119 carries the 2-(S-cysteinyl)pyruvic acid O-phosphothioketal modification. UDP-N-acetyl-alpha-D-glucosamine is bound by residues 124 to 128 (RPIEQ), D308, and V330.

It belongs to the EPSP synthase family. MurA subfamily.

Its subcellular location is the cytoplasm. The enzyme catalyses phosphoenolpyruvate + UDP-N-acetyl-alpha-D-glucosamine = UDP-N-acetyl-3-O-(1-carboxyvinyl)-alpha-D-glucosamine + phosphate. The protein operates within cell wall biogenesis; peptidoglycan biosynthesis. Its function is as follows. Cell wall formation. Adds enolpyruvyl to UDP-N-acetylglucosamine. The protein is UDP-N-acetylglucosamine 1-carboxyvinyltransferase 1 of Staphylococcus aureus (strain MRSA252).